The sequence spans 91 residues: MALLQQEKQEIIETYRLHDTDTGSAEVQVALLTSRINQLSQHLQKNPKDFNSRRGLMMMIGRRKRLLNYIAKRSPDRFRELAERLNIRVKK.

The protein belongs to the universal ribosomal protein uS15 family. Part of the 30S ribosomal subunit. Forms a bridge to the 50S subunit in the 70S ribosome, contacting the 23S rRNA.

In terms of biological role, one of the primary rRNA binding proteins, it binds directly to 16S rRNA where it helps nucleate assembly of the platform of the 30S subunit by binding and bridging several RNA helices of the 16S rRNA. Functionally, forms an intersubunit bridge (bridge B4) with the 23S rRNA of the 50S subunit in the ribosome. This is Small ribosomal subunit protein uS15 from Synechococcus sp. (strain JA-3-3Ab) (Cyanobacteria bacterium Yellowstone A-Prime).